The primary structure comprises 2019 residues: Sodium channel protein type 5 subunit alpha (2019 aa).

Residues methionine 1 to valine 129 lie on the Cytoplasmic side of the membrane. The disordered stretch occupies residues arginine 27–aspartate 66. Serine 36 carries the phosphoserine modification. Phosphothreonine is present on threonine 38. A compositionally biased stretch (basic and acidic residues) spans glutamate 41 to proline 52. The I repeat unit spans residues valine 113–asparagine 420. Residues histidine 130 to alanine 149 traverse the membrane as a helical segment. Over glutamine 150–threonine 157 the chain is Extracellular. The chain crosses the membrane as a helical span at residues lysine 158–arginine 179. Over glycine 180–phenylalanine 188 the chain is Cytoplasmic. The helical transmembrane segment at leucine 189–phenylalanine 209 threads the bilayer. The Extracellular segment spans residues valine 210–serine 216. Asparagine 214 is a glycosylation site (N-linked (GlcNAc...) asparagine). Residues alanine 217 to leucine 236 form a helical membrane-spanning segment. Residues lysine 237–lysine 249 lie on the Cytoplasmic side of the membrane. Residues leucine 250–phenylalanine 272 form a helical membrane-spanning segment. Over methionine 273–serine 357 the chain is Extracellular. A disulfide bond links cysteine 280 and cysteine 335. Asparagine 283, asparagine 288, asparagine 291, asparagine 318, and asparagine 328 each carry an N-linked (GlcNAc...) asparagine glycan. The segment at residues phenylalanine 358–tyrosine 378 is an intramembrane region (pore-forming). The Extracellular segment spans residues glutamine 379–glycine 386. Residues lysine 387–alanine 413 traverse the membrane as a helical segment. Residues methionine 414–alanine 719 lie on the Cytoplasmic side of the membrane. Phosphoserine occurs at positions 457, 460, 483, and 484. Disordered regions lie at residues leucine 461 to glutamine 575 and glutamate 610 to alanine 647. Threonine 486 bears the Phosphothreonine mark. The span at aspartate 491 to proline 503 shows a compositional bias: basic and acidic residues. A phosphoserine mark is found at serine 497 and serine 510. The segment covering asparagine 507–serine 528 has biased composition (polar residues). Arginine 526 carries the post-translational modification Dimethylated arginine; alternate. Arginine 526 carries the omega-N-methylarginine; alternate modification. Residues serine 539 and serine 571 each carry the phosphoserine modification. 2 positions are modified to phosphoserine: serine 664 and serine 667. The II repeat unit spans residues cysteine 699–glycine 971. The helical transmembrane segment at aspartate 720–glutamate 737 threads the bilayer. Residues histidine 738–glutamate 746 lie on the Extracellular side of the membrane. Asparagine 740 carries an N-linked (GlcNAc...) asparagine glycan. Residues glutamate 747–isoleucine 769 form a helical membrane-spanning segment. Topologically, residues alanine 770 to tyrosine 775 are cytoplasmic. A helical transmembrane segment spans residues tyrosine 776–leucine 796. Residues glycine 797–valine 806 lie on the Extracellular side of the membrane. Asparagine 803 carries an N-linked (GlcNAc...) asparagine glycan. Residues leucine 807–serine 821 traverse the membrane as a helical segment. Residues tryptophan 822–alanine 838 lie on the Cytoplasmic side of the membrane. Residues leucine 839–leucine 860 form a helical membrane-spanning segment. Residues phenylalanine 861 to phenylalanine 886 are Extracellular-facing. A glycan (N-linked (GlcNAc...) asparagine) is linked at asparagine 864. An intramembrane region (pore-forming) is located at residues phenylalanine 887–methionine 905. Topologically, residues tryptophan 906–glutamine 914 are extracellular. Cysteine 908 and cysteine 917 are oxidised to a cystine. Residues serine 915–serine 943 traverse the membrane as a helical segment. Residues phenylalanine 944–glutamate 1205 are Cytoplasmic-facing. The segment at histidine 1000–alanine 1144 is disordered. The span at glutamate 1017 to proline 1036 shows a compositional bias: basic and acidic residues. Positions serine 1056–glutamate 1075 are enriched in acidic residues. The span at serine 1098–alanine 1115 shows a compositional bias: low complexity. The stretch at proline 1189–leucine 1503 is one III repeat. Residues histidine 1206–glutamate 1227 traverse the membrane as a helical segment. Topologically, residues aspartate 1228–lysine 1238 are extracellular. Residues valine 1239–valine 1261 form a helical membrane-spanning segment. The Cytoplasmic portion of the chain corresponds to alanine 1262 to threonine 1270. The chain crosses the membrane as a helical span at residues asparagine 1271–leucine 1293. Over glycine 1294–glycine 1299 the chain is Extracellular. The helical transmembrane segment at proline 1300–phenylalanine 1319 threads the bilayer. Residues glutamate 1320–alanine 1332 lie on the Cytoplasmic side of the membrane. Residues isoleucine 1333 to leucine 1357 form a helical membrane-spanning segment. At phenylalanine 1358–valine 1402 the chain is on the extracellular side. N-linked (GlcNAc...) asparagine glycosylation is found at asparagine 1367, asparagine 1376, asparagine 1382, and asparagine 1390. The segment at residues asparagine 1403–methionine 1424 is an intramembrane region (pore-forming). Topologically, residues aspartate 1425 to tyrosine 1447 are extracellular. The chain crosses the membrane as a helical span at residues methionine 1448–isoleucine 1472. The Cytoplasmic segment spans residues aspartate 1473 to glutamine 1530. Serine 1505 is subject to Phosphoserine; by PKC. One copy of the IV repeat lies at isoleucine 1512–glutamine 1809. A helical transmembrane segment spans residues alanine 1531–valine 1549. At glutamate 1550–asparagine 1560 the chain is on the extracellular side. Residues isoleucine 1561–alanine 1582 form a helical membrane-spanning segment. Over alanine 1583–asparagine 1591 the chain is Cytoplasmic. A helical transmembrane segment spans residues serine 1592–isoleucine 1614. Residues glutamine 1615–proline 1621 lie on the Extracellular side of the membrane. A helical membrane pass occupies residues threonine 1622–alanine 1642. Residues lysine 1643–leucine 1652 lie on the Cytoplasmic side of the membrane. Residues methionine 1653–phenylalanine 1681 form a helical membrane-spanning segment. Over alanine 1682–phenylalanine 1699 the chain is Extracellular. Positions alanine 1700–aspartate 1716 form an intramembrane region, pore-forming. The Extracellular portion of the chain corresponds to glycine 1717–proline 1747. Residues alanine 1748–isoleucine 1773 form a helical membrane-spanning segment. Over leucine 1774–valine 2019 the chain is Cytoplasmic. The segment at aspartate 1841–glutamate 1903 is interaction with FGF13. The 30-residue stretch at glutamate 1903–glutamine 1932 folds into the IQ domain. Residues serine 1963 to serine 1982 are compositionally biased toward low complexity. The segment at serine 1963 to valine 2019 is disordered. An interaction with NEDD4, NEDD4L and WWP2 region spans residues proline 1977 to tyrosine 1980.

Belongs to the sodium channel (TC 1.A.1.10) family. Nav1.5/SCN5A subfamily. As to quaternary structure, cannot form the same regulatory interactions with beta subunits as other Navs do. Interacts with the PDZ domain of the syntrophin SNTA1, SNTB1 and SNTB2. Interacts with NEDD4, NEDD4L, WWP2 and GPD1L. Interacts with CALM. Interacts with FGF13; the interaction is direct and may regulate SNC5A density at membranes and function. Interacts with FGF12 and FGF14. Interacts with ANK3. Interacts with PKP2 (via N-terminus). Interacts with TMEM233. Interacts with XIRP2; the interaction is required for normal action potential configuration in the heart. In terms of processing, phosphorylation at Ser-1505 by PKC in a highly conserved cytoplasmic loop slows inactivation of the sodium channel and reduces peak sodium currents. Regulated through phosphorylation by CaMK2D. Ubiquitinated by NEDD4L; which promotes its endocytosis. Does not seem to be ubiquitinated by NEDD4 or WWP2. Post-translationally, lacks the cysteine which covalently binds the conotoxin GVIIJ. This cysteine (position 868) is speculated in other sodium channel subunits alpha to be implied in covalent binding with the sodium channel subunit beta-2 or beta-4. In terms of processing, N-glycosylated at Asn-318, probably hinders potential interaction with regulatory subunits. In terms of tissue distribution, expressed in the myocardium (at protein level).

The protein resides in the cell membrane. It localises to the cytoplasm. The protein localises to the perinuclear region. Its subcellular location is the sarcolemma. It is found in the T-tubule. The protein resides in the cell junction. The catalysed reaction is Na(+)(in) = Na(+)(out). Channel inactivation is regulated by intracellular calcium levels. It is a tetrodotoxin-resistant voltage-gated Na(+) channel (Nav). In terms of biological role, pore-forming subunit of Nav1.5, a voltage-gated sodium (Nav) channel that directly mediates the depolarizing phase of action potentials in excitable membranes. Navs, also called VGSCs (voltage-gated sodium channels) or VDSCs (voltage-dependent sodium channels), operate by switching between closed and open conformations depending on the voltage difference across the membrane. In the open conformation they allow Na(+) ions to selectively pass through the pore, along their electrochemical gradient. The influx of Na(+) ions provokes membrane depolarization, initiating the propagation of electrical signals throughout cells and tissues. Nav1.5 is the predominant sodium channel expressed in myocardial cells and it is responsible for the initial upstroke of the action potential in cardiac myocytes, thereby initiating the heartbeat. Required for normal electrical conduction including formation of the infranodal ventricular conduction system and normal action potential configuration, as a result of its interaction with XIRP2. The chain is Sodium channel protein type 5 subunit alpha from Mus musculus (Mouse).